Here is a 276-residue protein sequence, read N- to C-terminus: Undecaprenyl-diphosphatase (276 aa).

The next 8 membrane-spanning stretches (helical) occupy residues 6–26 (IEILKVIFLGIVEGITEWLPI), 49–69 (EMFFVVIQLGAILAVVVMFWN), 89–109 (FSLWFKVAVACVPSAIMGILF), 117–137 (LHTPVVIAIMLILYGVLFIVI), 151–171 (LADISYKTALMIGVFQVLSLI), 181–201 (IIGALLIGVSRVAAAEFTFFL), 224–244 (AELLTLVIGMAVAFAVSVFVI), and 256–276 (FKVFGWYRIVLGILVLLITAI).

It belongs to the UppP family.

It is found in the cell membrane. It carries out the reaction di-trans,octa-cis-undecaprenyl diphosphate + H2O = di-trans,octa-cis-undecaprenyl phosphate + phosphate + H(+). In terms of biological role, catalyzes the dephosphorylation of undecaprenyl diphosphate (UPP). Confers resistance to bacitracin. This chain is Undecaprenyl-diphosphatase, found in Enterococcus faecalis (Streptococcus faecalis).